We begin with the raw amino-acid sequence, 318 residues long: L-lactate dehydrogenase (318 aa).

Residues valine 16, aspartate 37, and tyrosine 69 each contribute to the NAD(+) site. Residues glutamine 86, arginine 92, and 124-127 (NPVD) each bind substrate. NAD(+) contacts are provided by residues 122–124 (ASN) and serine 147. 152 to 155 (DSAR) serves as a coordination point for substrate. The active-site Proton acceptor is the histidine 179. Position 223 is a phosphotyrosine (tyrosine 223). Substrate is bound at residue threonine 232.

Belongs to the LDH/MDH superfamily. LDH family. Homotetramer.

It localises to the cytoplasm. The catalysed reaction is (S)-lactate + NAD(+) = pyruvate + NADH + H(+). It participates in fermentation; pyruvate fermentation to lactate; (S)-lactate from pyruvate: step 1/1. Catalyzes the conversion of lactate to pyruvate. In Mycoplasma mycoides subsp. mycoides SC (strain CCUG 32753 / NCTC 10114 / PG1), this protein is L-lactate dehydrogenase.